Reading from the N-terminus, the 1121-residue chain is Potassium channel subfamily U member 1 (1121 aa).

The Extracellular portion of the chain corresponds to 1–24; it reads MSQTLLDSLNQKELTETSCTIEIQ. A helical membrane pass occupies residues 25 to 45; the sequence is AAFILSSLATFFGGLIILFLF. The Cytoplasmic portion of the chain corresponds to 46–101; sequence RIALKSSRSWKYVKGPRGLLELFSSRRIEANPLRKLYFHGVFRQRIEMLLSAQTVV. A helical membrane pass occupies residues 102–122; the sequence is GQVLVILVFVLSIGSLVIYFI. The Extracellular portion of the chain corresponds to 123–137; the sequence is NSMDPVRRCSSYEDK. Residues 138-158 form a helical membrane-spanning segment; it reads IVHVDLSFNAFFSFYFGLRFW. The Cytoplasmic portion of the chain corresponds to 159 to 165; sequence AAEDKIK. The helical transmembrane segment at 166–186 threads the bilayer; sequence FWLEMNSIVDIFTIPPTFISY. Topologically, residues 187–188 are extracellular; sequence YL. A helical; Voltage-sensor transmembrane segment spans residues 189-209; sequence KSNWLGLRFLRALRLLELPKI. Residues 210-226 lie on the Cytoplasmic side of the membrane; sequence LQILQVIKTSNSVKLSK. The helical transmembrane segment at 227-247 threads the bilayer; sequence LLSIVISTWFTAAGFLHLVEN. Residues 248–259 lie on the Extracellular side of the membrane; sequence SGDPWLNGRNSQ. The pore-forming intramembrane region spans 260 to 282; that stretch reads TMSYFESIYLVTATMSTVGFGDV. Residues 276-279 carry the Selectivity for potassium motif; sequence TVGF. The Extracellular segment spans residues 283–290; that stretch reads VAKTSLGR. A helical transmembrane segment spans residues 291 to 311; it reads IFIVFFTLGSLILFANYIPEM. At 312 to 1121 the chain is on the cytoplasmic side; sequence VELFSTRKKY…LDASDIVQEK (810 aa). RCK N-terminal domains lie at 331–473 and 718–889; these read KKFI…DNIL and QNHI…DGML. 2 disordered regions span residues 836–858 and 1052–1076; these read SPTPGSSKSEVKPSSAFDSKERK and DSSPSIQAQNNSTNATTPLAQGSNF.

Belongs to the potassium channel family. Calcium-activated (TC 1.A.1.3) subfamily. KCa5.1/KCNU1 sub-subfamily. In terms of assembly, homotetramer; which constitutes the calcium-activated potassium channel. Interact with LRRC52; this interaction changes some channel gating properties, such as shifting gating to more negative potentials at a given pH. Testis-specific. Mainly expressed in spermatocytes. In terms of tissue distribution, expressed in testis, brain, eye and kidney.

Its subcellular location is the cell membrane. The protein resides in the cytoplasm. The catalysed reaction is K(+)(in) = K(+)(out). Regulated by changes in cytosolic pH; activated by alkalization. In contrast to human KCNU1 is not activated by Ca(2+) or Mg(2+). The auxiliary subunit LRRC52 shifts the activation of KCNU1 to more negative potentials at a given pH. Functionally, testis-specific potassium channel activated by both intracellular pH and membrane voltage that mediates export of K(+). Represents the primary spermatozoan K(+) current. The channel underlies a pH-triggered membrane hyperpolarization during the process of sperm capacitation, as sperm encounter the alkaline environment near the ovum in the female reproductive tract, thereby playing an essential for male fertility. In Mus musculus (Mouse), this protein is Potassium channel subfamily U member 1 (Kcnu1).